The sequence spans 538 residues: Putative cysteine ligase BshC (538 aa).

A coiled-coil region spans residues 248 to 268 (ISKYKEVQEGLRNQQEVIKEL).

Belongs to the BshC family.

Functionally, involved in bacillithiol (BSH) biosynthesis. May catalyze the last step of the pathway, the addition of cysteine to glucosamine malate (GlcN-Mal) to generate BSH. This chain is Putative cysteine ligase BshC, found in Bacillus cereus (strain ATCC 14579 / DSM 31 / CCUG 7414 / JCM 2152 / NBRC 15305 / NCIMB 9373 / NCTC 2599 / NRRL B-3711).